The primary structure comprises 250 residues: Capsid protein (250 aa).

Residues 1 to 31 (MPKRDAPWLMAGTSKVSRSGNYSPSGGMGSK) are disordered. The short motif at 3-19 (KRDAPWLMAGTSKVSRS) is the Bipartite nuclear localization signal element. Residues 14-31 (SKVSRSGNYSPSGGMGSK) are compositionally biased toward polar residues. Residues 34 to 48 (KANAWVNRPMYRKPR) carry the Nuclear localization signal motif. A zinc finger lies at 53 to 70 (YKSPDVPKGCEGPCKVQS). Positions 95–116 (ITHRVGKRFCVKSVYILGKIWM) match the Nuclear export signal motif. The Bipartite nuclear localization signal motif lies at 194–241 (RRFWKVNNHVVYNHQEAGKYENHTENALLLYMACTHASNPVYATLKIR).

Belongs to the geminiviridae capsid protein family. Homomultimer. Binds to single-stranded and double-stranded viral DNA. Interacts (via nuclear localization signals) with host importin alpha-1a.

Its subcellular location is the virion. It localises to the host nucleus. Encapsidates the viral DNA into characteristic twinned ('geminate') particles. Binds the genomic viral ssDNA and shuttles it into and out of the cell nucleus. The CP of bipartite geminiviruses is not required for cell-to-cell or systemic movement. The sequence is that of Capsid protein from Bean golden yellow mosaic virus (isolate Puerto Rico) (BGYMV).